A 721-amino-acid polypeptide reads, in one-letter code: Polyribonucleotide nucleotidyltransferase (721 aa).

Mg(2+) is bound by residues D495 and D501. Positions 562–621 (PRITTIKIRPERIKDIIGPGGKTIKDITARTGTSINIEDDGSVSIASPNQDKVEEAIKMI) constitute a KH domain. The region spanning 631–699 (GRIYLGTVRK…RSGKIRLSRK (69 aa)) is the S1 motif domain. Positions 699-721 (KEALADSAKKSEGTEPPKGEPAK) are disordered.

It belongs to the polyribonucleotide nucleotidyltransferase family. It depends on Mg(2+) as a cofactor.

It localises to the cytoplasm. It carries out the reaction RNA(n+1) + phosphate = RNA(n) + a ribonucleoside 5'-diphosphate. Functionally, involved in mRNA degradation. Catalyzes the phosphorolysis of single-stranded polyribonucleotides processively in the 3'- to 5'-direction. This Anaeromyxobacter dehalogenans (strain 2CP-1 / ATCC BAA-258) protein is Polyribonucleotide nucleotidyltransferase.